We begin with the raw amino-acid sequence, 308 residues long: Ectoine dioxygenase (308 aa).

Gln131 contacts L-ectoine. A 2-oxoglutarate-binding site is contributed by Lys137. The Fe cation site is built by His148, Asp150, and His249.

It belongs to the PhyH family. EctD subfamily. Homodimer. Fe(2+) is required as a cofactor.

It carries out the reaction L-ectoine + 2-oxoglutarate + O2 = 5-hydroxyectoine + succinate + CO2. Involved in the biosynthesis of 5-hydroxyectoine, called compatible solute, which helps organisms to survive extreme osmotic stress by acting as a highly soluble organic osmolyte. Catalyzes the 2-oxoglutarate-dependent selective hydroxylation of L-ectoine to yield (4S,5S)-5-hydroxyectoine. The sequence is that of Ectoine dioxygenase from Bordetella parapertussis (strain 12822 / ATCC BAA-587 / NCTC 13253).